The chain runs to 522 residues: Sterol O-acyltransferase 2 (522 aa).

Disordered regions lie at residues 1–36 (MEPG…HRAP) and 74–96 (SYPS…TQEP). Residues 1–120 (MEPGGARLRL…LDELMEVQHF (120 aa)) are Cytoplasmic-facing. Over residues 17-36 (GGERERQPCGDGNTETHRAP) the composition is skewed to basic and acidic residues. H119 lines the cholesterol pocket. Residues 121–142 (RTIYHMFIAGLCVFIISTLAID) form a helical membrane-spanning segment. At 143 to 162 (FIDEGRLLLEFDLLIFSFGQ) the chain is on the lumenal side. The chain crosses the membrane as a helical span at residues 163–188 (LPLALVTWVPMFLSTLLAPYQALRLW). Residues 189-196 (ARGTWTQA) are Cytoplasmic-facing. The helical transmembrane segment at 197 to 220 (TGLGCALLAAHAVVLCALPVHVAV) threads the bilayer. Topologically, residues 221 to 228 (EHQLPPAS) are lumenal. Residues 229 to 252 (RCVLVFEQVRFLMKSYSFLREAVP) form a helical membrane-spanning segment. Residues 253-293 (GTLRARRGEGIQAPSFSSYLYFLFCPTLIYRETYPRTPYVR) are Cytoplasmic-facing. C277 carries the post-translational modification Cysteine sulfenic acid (-SOH); alternate. C277 is covalently cross-linked (Glycyl cysteine thioester (Cys-Gly) (interchain with G-Cter in ubiquitin); alternate). The chain crosses the membrane as a helical span at residues 294 to 326 (WNYVAKNFAQALGCVLYACFILGRLCVPVFANM). The Lumenal segment spans residues 327–343 (SREPFSTRALVLSILHA). A helical transmembrane segment spans residues 344-369 (TLPGIFMLLLIFFAFLHCWLNAFAEM). The Cytoplasmic portion of the chain corresponds to 370–417 (LRFGDRMFYRDWWNSTSFSNYYRTWNVVVHDWLYSYVYQDGLRLLGAR). The short motif at 377–383 (FYRDWWN) is the FYXDWWN motif element. An acyl-CoA is bound by residues N389, R392, N395, H399, Y407, and S430. Residues 418-442 (ARGVAMLGVFLVSAVAHEYIFCFVL) traverse the membrane as a helical segment. The active site involves H434. The Lumenal portion of the chain corresponds to 443 to 448 (GFFYPV). Residues 449-464 (MLILFLVIGGMLNFMM) traverse the membrane as a helical segment. Over 465 to 470 (HDQRTG) the chain is Cytoplasmic. The chain crosses the membrane as a helical span at residues 471-502 (PAWNVLMWTMLFLGQGIQVSLYCQEWYARRHC). Residues 503–522 (PLPQATFWGLVTPRSWSCHT) are Lumenal-facing.

Belongs to the membrane-bound acyltransferase family. Sterol o-acyltransferase subfamily. As to quaternary structure, may form homo- or heterodimers. Interacts with INSIG1; the interaction is direct and promotes association with AMFR/gp78. Polyubiquitinated by AMFR/gp78 at Cys-277, leading to its degradation when the lipid levels are low. Association with AMFR/gp78 is mediated via interaction with INSIG1. High concentration of cholesterol and fatty acid results in Cys-277 oxidation, preventing ubiquitination at the same site, resulting in protein stabilization. In terms of processing, oxidized at Cys-277: high concentration of cholesterol and fatty acid induce reactive oxygen species, which oxidizes Cys-277, preventing ubiquitination at the same site, and resulting in protein stabilization. In terms of tissue distribution, expression seems confined in hepatocytes and enterocytes.

It is found in the endoplasmic reticulum membrane. The catalysed reaction is a sterol + a long-chain fatty acyl-CoA = a long-chain 3-hydroxysterol ester + CoA. The enzyme catalyses cholesterol + an acyl-CoA = a cholesterol ester + CoA. It catalyses the reaction cholesterol + (9Z)-octadecenoyl-CoA = cholesteryl (9Z-octadecenoate) + CoA. It carries out the reaction (5Z,8Z,11Z,14Z,17Z)-eicosapentaenoyl-CoA + cholesterol = (5Z,8Z,11Z,14Z,17Z-eicosapentaenoyl)-cholesterol + CoA. The catalysed reaction is (9Z,12Z,15Z)-octadecatrienoyl-CoA + cholesterol = (9Z,12Z,15Z-octadecatrienoyl)-cholesterol + CoA. The enzyme catalyses (5Z,8Z,11Z,14Z)-eicosatetraenoyl-CoA + cholesterol = cholesteryl (5Z,8Z,11Z,14Z)-eicosatetraenoate + CoA. Its function is as follows. Catalyzes the formation of fatty acid-cholesterol esters, which are less soluble in membranes than cholesterol. Plays a role in lipoprotein assembly and dietary cholesterol absorption. Utilizes oleoyl-CoA ((9Z)-octadecenoyl-CoA) and linolenoyl-CoA ((9Z,12Z,15Z)-octadecatrienoyl-CoA) as substrates. May provide cholesteryl esters for lipoprotein secretion from hepatocytes and intestinal mucosa. In terms of biological role, has lower enzymatic activity compared to isoform 1. The chain is Sterol O-acyltransferase 2 from Homo sapiens (Human).